The following is a 122-amino-acid chain: Large ribosomal subunit protein uL18 (122 aa).

The span at 1 to 21 (MSKLSRKQQTQKRHRRLRRHI) shows a compositional bias: basic residues. A disordered region spans residues 1 to 25 (MSKLSRKQQTQKRHRRLRRHITGTS).

It belongs to the universal ribosomal protein uL18 family. Part of the 50S ribosomal subunit; part of the 5S rRNA/L5/L18/L25 subcomplex. Contacts the 5S and 23S rRNAs.

In terms of biological role, this is one of the proteins that bind and probably mediate the attachment of the 5S RNA into the large ribosomal subunit, where it forms part of the central protuberance. This is Large ribosomal subunit protein uL18 from Synechococcus sp. (strain CC9902).